Reading from the N-terminus, the 444-residue chain is E3 ubiquitin-protein ligase RNFT2 (444 aa).

Topologically, residues 1 to 181 are extracellular; it reads MWLFTVNQVL…ILLAKLCFQH (181 aa). 2 disordered regions span residues 13 to 41 and 92 to 149; these read MQRR…ASVD and PASR…PGTP. Positions 107–121 are enriched in basic residues; that stretch reads YHHRQPHHHFHHGGH. Over residues 131–140 the composition is skewed to basic and acidic residues; it reads GGDHRGHSEE. The helical transmembrane segment at 182–202 threads the bilayer; sequence KLGIAVCIGMASTFAYANSTL. The Cytoplasmic portion of the chain corresponds to 203–214; the sequence is REQVSLKEKRSV. The helical transmembrane segment at 215–235 threads the bilayer; sequence LVILWILAFLAGNTLYVLYTF. Over 236–255 the chain is Extracellular; the sequence is SSQQLYNSLIFLKPNLEMLD. The chain crosses the membrane as a helical span at residues 256 to 276; that stretch reads FFDLLWIVGIADFVLKYITIA. Residues 277 to 329 lie on the Cytoplasmic side of the membrane; that stretch reads LKCLIVALPKIILAVKSKGKFYLVIEELSQLFRSLVPIQLWYKYIMGDDSSNS. A helical transmembrane segment spans residues 330–350; the sequence is YFLGGVLIVLYSLCKSFDICG. Over 351–444 the chain is Extracellular; that stretch reads RVGGVRKALK…GATSAHFQVY (94 aa). The RING-type zinc finger occupies 384–422; it reads CAICQAEFREPLILLCQHVFCEECLCLWLDRERTCPLCR.

The protein resides in the membrane. E3 ubiquitin-protein ligase that negatively regulates IL3-dependent cellular responses through IL3RA ubiquitination and degradation by the proteasome, having an anti-inflammatory effect. The polypeptide is E3 ubiquitin-protein ligase RNFT2 (Homo sapiens (Human)).